The primary structure comprises 598 residues: Arginine--tRNA ligase (598 aa).

The 'HIGH' region signature appears at 131–141; sequence ANPTGPMHVGH. Positions 288-308 are disordered; the sequence is KLPPPKSKKGQPPAQPQPDEE.

The protein belongs to the class-I aminoacyl-tRNA synthetase family. In terms of assembly, monomer.

It localises to the cytoplasm. It catalyses the reaction tRNA(Arg) + L-arginine + ATP = L-arginyl-tRNA(Arg) + AMP + diphosphate. The protein is Arginine--tRNA ligase of Anaeromyxobacter sp. (strain K).